Consider the following 291-residue polypeptide: Putative fatty acid elongase 4 (291 aa).

Helical transmembrane passes span 46 to 66 (ILFQ…FILI), 79 to 99 (FTLK…SIIA), and 254 to 274 (NLYL…QFFV).

This sequence belongs to the ELO family.

The protein localises to the membrane. The catalysed reaction is a very-long-chain acyl-CoA + malonyl-CoA + H(+) = a very-long-chain 3-oxoacyl-CoA + CO2 + CoA. The protein operates within lipid metabolism; fatty acid biosynthesis. Could be implicated in synthesis of very long chain fatty acids. The chain is Putative fatty acid elongase 4 (elo-4) from Caenorhabditis elegans.